The primary structure comprises 266 residues: Tryptophan synthase alpha chain (266 aa).

Active-site proton acceptor residues include glutamate 49 and aspartate 60.

Belongs to the TrpA family. In terms of assembly, tetramer of two alpha and two beta chains.

The enzyme catalyses (1S,2R)-1-C-(indol-3-yl)glycerol 3-phosphate + L-serine = D-glyceraldehyde 3-phosphate + L-tryptophan + H2O. The protein operates within amino-acid biosynthesis; L-tryptophan biosynthesis; L-tryptophan from chorismate: step 5/5. Functionally, the alpha subunit is responsible for the aldol cleavage of indoleglycerol phosphate to indole and glyceraldehyde 3-phosphate. The chain is Tryptophan synthase alpha chain from Opitutus terrae (strain DSM 11246 / JCM 15787 / PB90-1).